Reading from the N-terminus, the 84-residue chain is uncharacterized protein (84 aa).

This is an uncharacterized protein from Escherichia coli O6:H1 (strain CFT073 / ATCC 700928 / UPEC).